Reading from the N-terminus, the 224-residue chain is Putative adhesin A1E_05320 (224 aa).

Positions 1-22 are cleaved as a signal peptide; it reads MKKLLLIAATSATMLSSTLSFA.

The sequence is that of Putative adhesin A1E_05320 from Rickettsia canadensis (strain McKiel).